The sequence spans 346 residues: Carbamoyl phosphate synthase small chain (346 aa).

The tract at residues 1-160 is CPSase; sequence MEDGSVFAGR…SVKEPVLLGE (160 aa). Residues Ser-39, Gly-209, and Gly-211 each coordinate L-glutamine. The region spanning 164–346 is the Glutamine amidotransferase type-1 domain; it reads CIGVVDCGVK…FLKLVERHGH (183 aa). The active-site Nucleophile is Cys-237. Leu-238, Gln-241, Asn-280, Gly-282, and Tyr-283 together coordinate L-glutamine. Catalysis depends on residues His-320 and Glu-322.

The protein belongs to the CarA family. As to quaternary structure, composed of two chains; the small (or glutamine) chain promotes the hydrolysis of glutamine to ammonia, which is used by the large (or ammonia) chain to synthesize carbamoyl phosphate. Tetramer of heterodimers (alpha,beta)4.

The enzyme catalyses hydrogencarbonate + L-glutamine + 2 ATP + H2O = carbamoyl phosphate + L-glutamate + 2 ADP + phosphate + 2 H(+). It catalyses the reaction L-glutamine + H2O = L-glutamate + NH4(+). The protein operates within amino-acid biosynthesis; L-arginine biosynthesis; carbamoyl phosphate from bicarbonate: step 1/1. Its pathway is pyrimidine metabolism; UMP biosynthesis via de novo pathway; (S)-dihydroorotate from bicarbonate: step 1/3. Its function is as follows. Small subunit of the glutamine-dependent carbamoyl phosphate synthetase (CPSase). CPSase catalyzes the formation of carbamoyl phosphate from the ammonia moiety of glutamine, carbonate, and phosphate donated by ATP, constituting the first step of 2 biosynthetic pathways, one leading to arginine and/or urea and the other to pyrimidine nucleotides. The small subunit (glutamine amidotransferase) binds and cleaves glutamine to supply the large subunit with the substrate ammonia. This Pyrobaculum aerophilum (strain ATCC 51768 / DSM 7523 / JCM 9630 / CIP 104966 / NBRC 100827 / IM2) protein is Carbamoyl phosphate synthase small chain.